We begin with the raw amino-acid sequence, 236 residues long: 1-(5-phosphoribosyl)-5-[(5-phosphoribosylamino)methylideneamino] imidazole-4-carboxamide isomerase (236 aa).

The active-site Proton acceptor is the aspartate 8. The Proton donor role is filled by aspartate 129.

Belongs to the HisA/HisF family.

The protein localises to the cytoplasm. It catalyses the reaction 1-(5-phospho-beta-D-ribosyl)-5-[(5-phospho-beta-D-ribosylamino)methylideneamino]imidazole-4-carboxamide = 5-[(5-phospho-1-deoxy-D-ribulos-1-ylimino)methylamino]-1-(5-phospho-beta-D-ribosyl)imidazole-4-carboxamide. It functions in the pathway amino-acid biosynthesis; L-histidine biosynthesis; L-histidine from 5-phospho-alpha-D-ribose 1-diphosphate: step 4/9. The chain is 1-(5-phosphoribosyl)-5-[(5-phosphoribosylamino)methylideneamino] imidazole-4-carboxamide isomerase from Methanospirillum hungatei JF-1 (strain ATCC 27890 / DSM 864 / NBRC 100397 / JF-1).